Here is a 157-residue protein sequence, read N- to C-terminus: Glutamyl-tRNA(Gln) amidotransferase subunit C, mitochondrial (157 aa).

It belongs to the GatC family. In terms of assembly, subunit of the heterotrimeric GatCAB amidotransferase (AdT) complex, composed of A, B and C subunits.

It is found in the mitochondrion. The catalysed reaction is L-glutamyl-tRNA(Gln) + L-glutamine + ATP + H2O = L-glutaminyl-tRNA(Gln) + L-glutamate + ADP + phosphate + H(+). In terms of biological role, allows the formation of correctly charged Gln-tRNA(Gln) through the transamidation of misacylated Glu-tRNA(Gln) in the mitochondria. The reaction takes place in the presence of glutamine and ATP through an activated gamma-phospho-Glu-tRNA(Gln). The protein is Glutamyl-tRNA(Gln) amidotransferase subunit C, mitochondrial of Drosophila virilis (Fruit fly).